The following is a 429-amino-acid chain: Histidine--tRNA ligase (429 aa).

The protein belongs to the class-II aminoacyl-tRNA synthetase family. Homodimer.

It is found in the cytoplasm. It carries out the reaction tRNA(His) + L-histidine + ATP = L-histidyl-tRNA(His) + AMP + diphosphate + H(+). This Streptococcus pneumoniae (strain Hungary19A-6) protein is Histidine--tRNA ligase.